A 115-amino-acid chain; its full sequence is Large ribosomal subunit protein uL24 (115 aa).

The protein belongs to the universal ribosomal protein uL24 family. As to quaternary structure, part of the 50S ribosomal subunit.

In terms of biological role, one of two assembly initiator proteins, it binds directly to the 5'-end of the 23S rRNA, where it nucleates assembly of the 50S subunit. Functionally, one of the proteins that surrounds the polypeptide exit tunnel on the outside of the subunit. The sequence is that of Large ribosomal subunit protein uL24 from Deinococcus geothermalis (strain DSM 11300 / CIP 105573 / AG-3a).